The following is a 419-amino-acid chain: Histidine--tRNA ligase (419 aa).

The protein belongs to the class-II aminoacyl-tRNA synthetase family.

It is found in the cytoplasm. The catalysed reaction is tRNA(His) + L-histidine + ATP = L-histidyl-tRNA(His) + AMP + diphosphate + H(+). In Pyrobaculum aerophilum (strain ATCC 51768 / DSM 7523 / JCM 9630 / CIP 104966 / NBRC 100827 / IM2), this protein is Histidine--tRNA ligase.